Consider the following 172-residue polypeptide: dCTP deaminase, dUMP-forming (172 aa).

Residues 93-98, Asp111, 119-121, Gln138, and Tyr151 each bind dCTP; these read RSSVGR and TLE. Residue Glu121 is the Proton donor/acceptor of the active site.

Belongs to the dCTP deaminase family. In terms of assembly, homotrimer.

The enzyme catalyses dCTP + 2 H2O = dUMP + NH4(+) + diphosphate. It functions in the pathway pyrimidine metabolism; dUMP biosynthesis; dUMP from dCTP: step 1/1. Its function is as follows. Bifunctional enzyme that catalyzes both the deamination of dCTP to dUTP and the hydrolysis of dUTP to dUMP without releasing the toxic dUTP intermediate. This is dCTP deaminase, dUMP-forming from Hathewaya histolytica (Clostridium histolyticum).